A 205-amino-acid polypeptide reads, in one-letter code: Guanylate kinase (205 aa).

Positions 7–185 (GNIFIISAAS…AEEDLRHIVN (179 aa)) constitute a Guanylate kinase-like domain. 14–21 (AASGTGKT) is a binding site for ATP.

The protein belongs to the guanylate kinase family.

The protein localises to the cytoplasm. The enzyme catalyses GMP + ATP = GDP + ADP. Functionally, essential for recycling GMP and indirectly, cGMP. This Neisseria meningitidis serogroup A / serotype 4A (strain DSM 15465 / Z2491) protein is Guanylate kinase (gmk).